Reading from the N-terminus, the 8903-residue chain is Nonribosomal peptide synthetase vlms (8903 aa).

A Carrier 1 domain is found at 11–84 (GSCRTTLGKV…ELADSIDEQN (74 aa)). Residues 13 to 81 (CRTTLGKVAA…TLAELADSID (69 aa)) form a thiolation (T) domain 1 region. Position 45 is an O-(pantetheine 4'-phosphoryl)serine (serine 45). 2 adenylation (A) domain regions span residues 59–736 (GIWV…SHLP) and 989–1386 (MAAQ…IKIR). Residues 572–953 (VPHQLDTEKL…FLLDGVNMSI (382 aa)) are condensation (C) domain 1. The region spanning 1524–1600 (SSMSTVEQEL…QLALAAESQA (77 aa)) is the Carrier 2 domain. Residues 1529–1597 (VEQELRQIWS…TIPQLALAAE (69 aa)) are thiolation (T) domain 2. An O-(pantetheine 4'-phosphoryl)serine modification is found at serine 1561. Positions 1613-2050 (FPLSPIQKMY…TVKELAAVSA (438 aa)) are epimerase (E) domain 1. The condensation (C) domain 2 stretch occupies residues 2091–2523 (DILPCSPIQQ…LLSVSEENKL (433 aa)). The tract at residues 2546–2943 (MSSHADATAI…GRQDSQVKIR (398 aa)) is adenylation (A) domain 2. Residues 3084-3160 (LFTTAIERQL…ELALQAKMVD (77 aa)) enclose the Carrier 3 domain. Positions 3089 to 3157 (IERQLRQVWS…TIPELALQAK (69 aa)) are thiolation (T) domain 3. Serine 3121 is modified (O-(pantetheine 4'-phosphoryl)serine). Residues 3174-3614 (FALSPIQQMY…AIKSLVEELM (441 aa)) are epimerase (E) domain 2. Residues 3655 to 4093 (EDILPCSPMQ…LMSTKDIQQL (439 aa)) are condensation (C) domain 3. Residues 4114–4512 (ERLNTQPESM…GRIDTQIKIR (399 aa)) are adenylation (A) domain 3. The 77-residue stretch at 4649-4725 (APRTTMEKKL…DLAEATELKC (77 aa)) folds into the Carrier 4 domain. The tract at residues 4654 to 4722 (MEKKLRDLFA…ILADLAEATE (69 aa)) is thiolation (T) domain 4. At serine 4686 the chain carries O-(pantetheine 4'-phosphoryl)serine. A condensation (C) domain 4 region spans residues 4775 to 5191 (EDVYPCSPLQ…AQLQMLSEED (417 aa)). The tract at residues 5216 to 5614 (ETMTSQPDAP…GRRDTQVKIR (399 aa)) is adenylation (A) domain 4. The region spanning 5753–5829 (APTTAMEKRL…DLAQELEQRH (77 aa)) is the Carrier 5 domain. The thiolation (T) domain 5 stretch occupies residues 5758-5826 (MEKRLQNLFC…RLGDLAQELE (69 aa)). Position 5790 is an O-(pantetheine 4'-phosphoryl)serine (serine 5790). Glutamate 5875 is a region of interest (condensation (C) domain 5). The adenylation (A) domain 5 stretch occupies residues 6311–6702 (EEQMSLRPSE…GRMDGQIKIR (392 aa)). In terms of domain architecture, Carrier 6 spans 6836 to 6912 (SSATNTERQL…ELAATLEVMD (77 aa)). The thiolation (T) domain 6 stretch occupies residues 6841 to 6909 (TERQLRQIWS…TIPELAATLE (69 aa)). Serine 6873 is modified (O-(pantetheine 4'-phosphoryl)serine). The tract at residues 6923–7349 (GFFELSPIQR…YGRTIKTLVE (427 aa)) is epimerase (E) domain 3. A condensation (C) domain 6 region spans residues 7391–7823 (EDILPCSPIQ…LVLTNDEAQI (433 aa)). The interval 7844-8240 (EQMARKPEAQ…LDRIGTQVKI (397 aa)) is adenylation (A) domain 6. The region spanning 8368-8444 (APISATEAVF…AMAACVSDVS (77 aa)) is the Carrier 7 domain. The segment at 8369–8441 (PISATEAVFC…VLHAMAACVS (73 aa)) is thiolation (T) domain 7. Serine 8405 carries the O-(pantetheine 4'-phosphoryl)serine modification. The condensation (C) domain 7 stretch occupies residues 8482–8897 (DVLPTTEFQT…MENPRSTVGH (416 aa)).

It belongs to the NRP synthetase family.

Its pathway is secondary metabolite biosynthesis. Its function is as follows. Nonribosomal peptide synthetase; part of the gene cluster that mediates the biosynthesis of verlamelin, a lipopeptide that exhibits antifungal activity against plant pathogenic fungi. Verlamelin is a cyclic hexadepsipeptide and is bridged by ester bonding between a 5-hydroxytetradecanoic acid moiety and a carboxyl group on the terminal Val of amide-bonded tetradecanoyl-hexapeptide D-allo-Thr-D-Ala-L-Pro-L-Gln-D-Tyr-L-Val. VlmA and vlmB are altogether regarded as essential components in the biosynthesis of 5-hydroxytetradecanoic acid. VlmA catalyzes the hydroxylation at position C5 of tetradecanoic acid produced in primary metabolism, while the precise function of vlmB still remains to be solved. To be loaded onto the waiting NRPS, 5-hydroxytetradecanoic acid is activated in the form of acyladenylate by the AMP-dependent ligase vlmC. VlmS seems to accept the fatty-acyl intermediate onto the initial module to further elongate amino acid residues by the downstream modules. In addition, in the last module at its C-terminus, vlmS contains a surplus condensation (C) domain that may be involved in cyclization, the last step to form verlamelin. This is Nonribosomal peptide synthetase vlms from Lecanicillium sp.